We begin with the raw amino-acid sequence, 65 residues long: Large ribosomal subunit protein bL35 (65 aa).

Belongs to the bacterial ribosomal protein bL35 family.

This is Large ribosomal subunit protein bL35 from Neisseria meningitidis serogroup A / serotype 4A (strain DSM 15465 / Z2491).